Consider the following 418-residue polypeptide: tRNA wybutosine-synthesizing protein 2 (418 aa).

S-adenosyl-L-methionine is bound by residues serine 228, lysine 235, 275–276 (EI), and 302–303 (EN).

The protein belongs to the class I-like SAM-binding methyltransferase superfamily. TRM5/TYW2 family.

The protein localises to the cytoplasm. It localises to the nucleus. The catalysed reaction is 4-demethylwyosine(37) in tRNA(Phe) + S-adenosyl-L-methionine = 4-demethyl-7-[(3S)-3-amino-3-carboxypropyl]wyosine(37) in tRNA(Phe) + S-methyl-5'-thioadenosine + H(+). The protein operates within tRNA modification; wybutosine-tRNA(Phe) biosynthesis. Its function is as follows. S-adenosyl-L-methionine-dependent transferase that acts as a component of the wybutosine biosynthesis pathway. Wybutosine is a hyper modified guanosine with a tricyclic base found at the 3'-position adjacent to the anticodon of eukaryotic phenylalanine tRNA. Catalyzes the transfer of the alpha-amino-alpha-carboxypropyl (acp) group from S-adenosyl-L-methionine to the C-7 position of 4-demethylwyosine (imG-14) to produce wybutosine-86. The chain is tRNA wybutosine-synthesizing protein 2 (trm12) from Schizosaccharomyces pombe (strain 972 / ATCC 24843) (Fission yeast).